We begin with the raw amino-acid sequence, 268 residues long: Interleukin-1 beta (268 aa).

The propeptide occupies 1–116 (MATVPELTSE…TWDDYSLECD (116 aa)).

The protein belongs to the IL-1 family. As to quaternary structure, monomer. In its precursor form, weakly interacts with full-length MEFV; the mature cytokine does not interact at all. Interacts with integrins ITGAV:ITGBV and ITGA5:ITGB1; integrin-binding is required for IL1B signaling. Interacts with cargo receptor TMED10; the interaction is direct and is required for the secretion of IL1B mature form. Interacts with HSP90AB1; the interaction facilitates cargo translocation into the ERGIC. Interacts with HSP90B1; the interaction facilitates cargo translocation into the ERGIC.

It localises to the cytoplasm. The protein resides in the cytosol. Its subcellular location is the secreted. The protein localises to the lysosome. It is found in the extracellular exosome. Its function is as follows. Potent pro-inflammatory cytokine. Initially discovered as the major endogenous pyrogen, induces prostaglandin synthesis, neutrophil influx and activation, T-cell activation and cytokine production, B-cell activation and antibody production, and fibroblast proliferation and collagen production. Promotes Th17 differentiation of T-cells. Synergizes with IL12/interleukin-12 to induce IFNG synthesis from T-helper 1 (Th1) cells. Plays a role in angiogenesis by inducing VEGF production synergistically with TNF and IL6. Involved in transduction of inflammation downstream of pyroptosis: its mature form is specifically released in the extracellular milieu by passing through the gasdermin-D (GSDMD) pore. The protein is Interleukin-1 beta (IL1B) of Oryctolagus cuniculus (Rabbit).